We begin with the raw amino-acid sequence, 1447 residues long: MDVGVTPRRHNPVDSICRKLQTIQRRDQEINSPFQIPKFQTNSYDSPHSGLRFNLEAILKKHTVRPDDSDSASSAGMLTPTASPGPGSSCNTPRAPITPVNATYSITSTLGTLGTIGDRRTSGTYSRPFRRNCSTPSAQTGDNYFNFTPRYSTQSQGPDTDVRTSKIPTPGLFSYNLNFSSDISNMDSELAYPALVVKRLSLGEGSLFTSEPKKESMAEVSLICEEDLLDTIFQACDTQCRGKVYVSHIVDFLRHTTCRSSEDSGLEELCNMLDPERKDISIDLDTYHAIMKEWIEDCRNQGKDLKNDTQQESSKLRDSLSAKRSALLNMTSGSLEAFGGEASRADLETSDLVFCVADLQLNNQKLQEEVRKLKQAVENMEDTNQKLIEENEELKTQAKMGQQLLQKEKMLKEEVEEMKLSLTSSEESRAQAAAQRKQMERENQSLISKIAALQEENMKVTLEAEELQKKMNDLCDLNADLQVQIHSFDAILADKESLIQEKNKQMDELKVAVVEYSSVTELLRADKNKLESQMQMMQPDVTIPGLSLSVAYRLNQTSSGSLQTELALAQNPLEGLEHLSTSVCFASSLDETLDREVLLLLQGPTPEQLSLEFKSLISRLKREFKEDGLTFLTAIRSLTENSETQEANTDLKMQGLEVQLEQRRTDWIRSLEQLDQYRDSLERELLKMASNMRRSRTEILHLSVKVQEQENQKQQLREEVDRLKTPLDNREASSQTPDHLQQVVEELDGPSLEWDEEYVLSESPPLQELGPDQQMLEELCCDEEVLQALKQEEEEPTETVSDKEKITAKSEGEGEATYDSGVENEEPQRDFTLSHMCLPDKKSERESNEAPFVGEGGEQRPCMSLKEEDRLPECTGPEDAHEQAAPLPHTHCECAGDQPLTYDNLEVTSVKDHILSTEPSSLMTCELVSPSTGHPEVGNSITGRTEQLVGTNGEPEEERLTTGADMSDLQRLGEGQLSKVSAKSDKSLLLPVAEEEEAMPEAVEVTSAGVNSPDKHKTGSKKTVVTSDSNSTGSADSLKDPSEKVKDMTFDPAASEDNIPTVPATQSPKKDPLASRNKLKKEMSSMEVIEEQKAQEDGEPTVVTEKEGDTSVSSENASDSTKDDKNSLSPSDKEIEAEFHRLSLGFKCDMFTLEKRLRLEERSRDLAEENVRKEVISCKALLQALIPRCEEDNQSMEIIHRVQKNLEILVQSMTRVSSRSEMLGAIHQETRVGKTVEVMIQHVENLRRMYTKEHAELLELRENLTPNERSFGSHSERDDFRNKKQTTSNIFKTTSRRISIATIPRSIGGQTHFDMPKDMAETEVERLSRRSPWNMAAKRPPLKRFVSSGTWADIDEPTLMNSPTPSPTDNAPPSLMEGRPAVSRGARGIWIWVALFVVLAVLLALLASLMLQPAVDAAPVGTGDSWMTIQQLLWPYTGLRHNGQPPV.

Residues 1 to 1388 (MDVGVTPRRH…RPAVSRGARG (1388 aa)) lie on the Cytoplasmic side of the membrane. Disordered regions lie at residues 64–96 (VRPD…PRAP) and 420–439 (LSLT…RKQM). The span at 71–92 (SASSAGMLTPTASPGPGSSCNT) shows a compositional bias: polar residues. Coiled-coil stretches lie at residues 354 to 518 (FCVA…EYSS) and 665 to 731 (TDWI…DNRE). Low complexity predominate over residues 420–436 (LSLTSSEESRAQAAAQR). Disordered regions lie at residues 790-828 (KQEE…EEPQ), 841-860 (KKSE…GEQR), 991-1132 (PVAE…SPSD), 1267-1289 (NERS…TTSN), and 1355-1379 (DEPT…MEGR). Basic and acidic residues predominate over residues 800–812 (VSDKEKITAKSEG). Residues 1021-1035 (KKTVVTSDSNSTGSA) are compositionally biased toward polar residues. 2 stretches are compositionally biased toward basic and acidic residues: residues 1037–1049 (SLKD…KDMT) and 1080–1096 (KKEM…KAQE). Positions 1076–1265 (RNKLKKEMSS…ELLELRENLT (190 aa)) are necessary for spindle and spindle pole localization. Polar residues predominate over residues 1110–1119 (TSVSSENASD). Basic and acidic residues predominate over residues 1120-1132 (STKDDKNSLSPSD). The segment covering 1359 to 1371 (LMNSPTPSPTDNA) has biased composition (polar residues). A necessary for nuclear membrane localization region spans residues 1388–1447 (GIWIWVALFVVLAVLLALLASLMLQPAVDAAPVGTGDSWMTIQQLLWPYTGLRHNGQPPV). Residues 1389-1409 (IWIWVALFVVLAVLLALLASL) traverse the membrane as a helical; Anchor for type IV membrane protein segment. The Lumenal portion of the chain corresponds to 1410–1447 (MLQPAVDAAPVGTGDSWMTIQQLLWPYTGLRHNGQPPV).

It belongs to the IRAG2 family.

It localises to the endoplasmic reticulum membrane. It is found in the nucleus envelope. The protein resides in the cytoplasm. Its subcellular location is the cytoskeleton. The protein localises to the microtubule organizing center. It localises to the centrosome. It is found in the spindle pole. The protein resides in the chromosome. Functionally, a maternally expressed membrane and cytoskeletal linker protein, which is essential for attachment of the centrosome to the male pronucleus. Promotes male and female pronucleus congression and subsequent fusion after fertilization. Congression is mediated by the sperm aster microtubules. The chain is Inositol 1,4,5-triphosphate receptor associated 2 (irag2) from Danio rerio (Zebrafish).